A 617-amino-acid chain; its full sequence is MIIRHLSENIINQIAAGEVIERPANVVKELVENAIDAGATRIEIITANGGKNFIKVSDNGCGIPADQLTLAVSRHCTSKITDDVHNICFLGFRGEALPSIGSVAKLKLISRTKEAENAAEISVTAGKIVGPKPAAANLGTIVEVRDLFFVTPARLKFMKTDRAETNAISDMIKRIAIAFPHIRFSLSGLDRTSMELSATENNTQGQLQRITQIMGKEFAPNSIALDAERESVRLTGFACLPSFNRNNSLHQFAYVNGRPVRDKFLWGAIRGAYADVMTRDRYPVAILFIDLPPAEVDVNVHPAKADVRFRDPGLIRGLIVGAIREALQQSGIRPTSTRSEAMLAAFQTQKPLTQQSLGNFKNAHQSSSYSPQSHHFATASMVHKPLDSTNSFGLKENATPIMEGLNTPSGDAYIPSTIPSSEELSYPLGAARAQIHKNYIIAQTQDSLIIVDQHAAHERLVYEALKNALYAKPLPSQLLLIPEIVELSEEDATCLLTHKDALQKFGLGIEPFGPGAILVRETPSMLGKINVQALIKDLADEAAEYDTTNNLKAMLDYVAATMACHGSIRSGRLLRPEEMNRLLRQMEAIPNTSTCNHGRPTYIELKLADIERLFGRK.

This sequence belongs to the DNA mismatch repair MutL/HexB family.

In terms of biological role, this protein is involved in the repair of mismatches in DNA. It is required for dam-dependent methyl-directed DNA mismatch repair. May act as a 'molecular matchmaker', a protein that promotes the formation of a stable complex between two or more DNA-binding proteins in an ATP-dependent manner without itself being part of a final effector complex. The protein is DNA mismatch repair protein MutL of Bartonella tribocorum (strain CIP 105476 / IBS 506).